A 249-amino-acid chain; its full sequence is 3-deoxy-D-manno-octulosonic acid kinase (249 aa).

Residue D175 is part of the active site.

The protein belongs to the protein kinase superfamily. KdkA/RfaP family.

The protein localises to the cell inner membrane. The catalysed reaction is an alpha-Kdo-(2-&gt;6)-lipid IVA + ATP = a 4-O-phospho-alpha-Kdo-(2-&gt;6)-lipid IVA + ADP + H(+). It functions in the pathway bacterial outer membrane biogenesis; LPS core biosynthesis. Its function is as follows. Catalyzes the ATP-dependent phosphorylation of the 3-deoxy-D-manno-octulosonic acid (Kdo) residue in Kdo-lipid IV(A) at the 4-OH position. The chain is 3-deoxy-D-manno-octulosonic acid kinase from Xanthomonas axonopodis pv. citri (strain 306).